The primary structure comprises 349 residues: Core protein VP7 (349 aa).

Asn45 is a glycosylation site (N-linked (GlcNAc...) asparagine; by host).

Belongs to the orbivirus VP7 family. Homotrimer.

It localises to the virion. Its function is as follows. Major structural core protein; binds to structural protein VP3. Constitutes the surface of the AHSV core. This chain is Core protein VP7 (Segment-7), found in Camelus dromedarius (Dromedary).